The primary structure comprises 578 residues: Sulfite reductase [NADPH] hemoprotein beta-component (578 aa).

4 residues coordinate [4Fe-4S] cluster: Cys441, Cys447, Cys487, and Cys491. Cys491 serves as a coordination point for siroheme.

Belongs to the nitrite and sulfite reductase 4Fe-4S domain family. In terms of assembly, alpha(8)-beta(8). The alpha component is a flavoprotein, the beta component is a hemoprotein. The cofactor is siroheme. [4Fe-4S] cluster serves as cofactor.

The catalysed reaction is hydrogen sulfide + 3 NADP(+) + 3 H2O = sulfite + 3 NADPH + 4 H(+). Its pathway is sulfur metabolism; hydrogen sulfide biosynthesis; hydrogen sulfide from sulfite (NADPH route): step 1/1. Functionally, component of the sulfite reductase complex that catalyzes the 6-electron reduction of sulfite to sulfide. This is one of several activities required for the biosynthesis of L-cysteine from sulfate. The sequence is that of Sulfite reductase [NADPH] hemoprotein beta-component from Vibrio vulnificus (strain CMCP6).